The primary structure comprises 84 residues: Conotoxin Tx8.1 (84 aa).

The N-terminal stretch at 1-19 (LKMGAMFVLLLLFTLASSH) is a signal peptide. The propeptide occupies 20–44 (REGDIQARKTHLKSDFYRTLPRFAR).

The protein belongs to the conotoxin S superfamily. In terms of processing, contains 5 disulfide bonds. As to expression, expressed by the venom duct.

The protein resides in the secreted. This chain is Conotoxin Tx8.1, found in Conus textile (Cloth-of-gold cone).